The sequence spans 360 residues: Dihydroorotate dehydrogenase (quinone) (360 aa).

FMN is bound by residues 60-64 (AGFDK) and Thr84. Residue Lys64 coordinates substrate. 109 to 113 (NRMGF) serves as a coordination point for substrate. FMN-binding residues include Asn137 and Asn168. Asn168 lines the substrate pocket. The active-site Nucleophile is the Ser171. Position 173 (Asn173) interacts with substrate. FMN-binding residues include Lys213 and Ser241. 242–243 (NT) is a binding site for substrate. FMN is bound by residues Gly264, Gly293, and 314 to 315 (YS).

The protein belongs to the dihydroorotate dehydrogenase family. Type 2 subfamily. Monomer. FMN serves as cofactor.

It is found in the cell membrane. It carries out the reaction (S)-dihydroorotate + a quinone = orotate + a quinol. The protein operates within pyrimidine metabolism; UMP biosynthesis via de novo pathway; orotate from (S)-dihydroorotate (quinone route): step 1/1. Its function is as follows. Catalyzes the conversion of dihydroorotate to orotate with quinone as electron acceptor. This is Dihydroorotate dehydrogenase (quinone) from Bartonella tribocorum (strain CIP 105476 / IBS 506).